The primary structure comprises 70 residues: MPREITEIKDFLLKARRKDAKSVKIKKNPDNVKFKVRCSRFLYTLVITDKEKAEKLKQSLPPGLQVKEVR.

This sequence belongs to the eukaryotic ribosomal protein eL38 family.

This Julodis onopordi (Jewel beetle) protein is Large ribosomal subunit protein eL38 (RpL38).